Reading from the N-terminus, the 414-residue chain is UPF0754 membrane protein tlr2287 (414 aa).

2 helical membrane-spanning segments follow: residues 2–22 and 386–406; these read ADISYWTLLVPPLAGGVIGYF and AIVRLGGILGFLIGVVQAGVL.

This sequence belongs to the UPF0754 family.

The protein localises to the cell inner membrane. In Thermosynechococcus vestitus (strain NIES-2133 / IAM M-273 / BP-1), this protein is UPF0754 membrane protein tlr2287.